Reading from the N-terminus, the 206-residue chain is uncharacterized protein (206 aa).

Residues Val-32–Asp-201 enclose the MurNAc-LAA domain.

It belongs to the N-acetylmuramoyl-L-alanine amidase 3 family.

This is an uncharacterized protein from Bacillus subtilis (strain 168).